Consider the following 199-residue polypeptide: Charged multivesicular body protein 1b (199 aa).

Positions 26-48 (DKEEKAEKAKIKKAIQKGNMEVA) form a coiled coil. Positions 132 to 156 (MEDTMSSTTTLTTPQNQVDMLLQEM) are interaction with IST1. A disordered region spans residues 167–199 (ELPQGQTGSVGTSVASAEQDELSQRLARLRDQV). Over residues 170-182 (QGQTGSVGTSVAS) the composition is skewed to polar residues. Positions 174–199 (GSVGTSVASAEQDELSQRLARLRDQV) are interaction with SPAST. The stretch at 178–199 (TSVASAEQDELSQRLARLRDQV) forms a coiled coil. Positions 180-196 (VASAEQDELSQRLARLR) are interaction with VPS4A, MITD1 and STAMBP. The interaction with VTA1 stretch occupies residues 180-199 (VASAEQDELSQRLARLRDQV). The interval 183–199 (AEQDELSQRLARLRDQV) is interaction with VPS4B. The short motif at 186–196 (DELSQRLARLR) is the MIT-interacting motif element.

It belongs to the SNF7 family. In terms of assembly, probable peripherally associated component of the endosomal sorting required for transport complex III (ESCRT-III). ESCRT-III components are thought to multimerize to form a flat lattice on the perimeter membrane of the endosome. Several assembly forms of ESCRT-III may exist that interact and act sequentially. Interacts with CHMP1A. Interacts with VTA1; the interaction probably involves the open conformation of CHMP1B. Interacts with CHMP2A. Interacts with VPS4A; the interaction is direct. Interacts with VPS4B; the interaction is direct. Interacts with SPAST (via MIT domain); the interaction is direct. Interacts with IST1. Interacts with MITD1. Interacts with STAMBP. As to expression, widely expressed. Expressed in pancreas, kidney, skeletal muscle, liver, lung, placenta and brain.

It localises to the cytoplasm. It is found in the cytosol. The protein localises to the endosome. The protein resides in the late endosome membrane. Probable peripherally associated component of the endosomal sorting required for transport complex III (ESCRT-III) which is involved in multivesicular bodies (MVBs) formation and sorting of endosomal cargo proteins into MVBs. MVBs contain intraluminal vesicles (ILVs) that are generated by invagination and scission from the limiting membrane of the endosome and mostly are delivered to lysosomes enabling degradation of membrane proteins, such as stimulated growth factor receptors, lysosomal enzymes and lipids. The MVB pathway appears to require the sequential function of ESCRT-O, -I,-II and -III complexes. ESCRT-III proteins mostly dissociate from the invaginating membrane before the ILV is released. The ESCRT machinery also functions in topologically equivalent membrane fission events, such as the terminal stages of cytokinesis and the budding of enveloped viruses (HIV-1 and other lentiviruses). ESCRT-III proteins are believed to mediate the necessary vesicle extrusion and/or membrane fission activities, possibly in conjunction with the AAA ATPase VPS4. Involved in cytokinesis. Involved in recruiting VPS4A and/or VPS4B and SPAST to the midbody of dividing cells. Involved in HIV-1 p6- and p9-dependent virus release. The sequence is that of Charged multivesicular body protein 1b (CHMP1B) from Homo sapiens (Human).